We begin with the raw amino-acid sequence, 444 residues long: E3 ubiquitin-protein ligase APD2 (444 aa).

A compositionally biased stretch (low complexity) spans Met-1 to Pro-15. The segment at Met-1–Pro-41 is disordered. Basic and acidic residues predominate over residues Thr-17–Pro-41. Transmembrane regions (helical) follow at residues Val-74–Gly-94 and Ile-312–Phe-332. An RING-type zinc finger spans residues Cys-393–Arg-432.

In terms of assembly, interacts with At1g78040, At1g10650, VHA-c4/AVAP4, VHA-c''2/VMA16 and TUFA. Expressed in the shoot apical meristems (SAM), root tips, pollen and inflorescences.

It localises to the endomembrane system. The catalysed reaction is S-ubiquitinyl-[E2 ubiquitin-conjugating enzyme]-L-cysteine + [acceptor protein]-L-lysine = [E2 ubiquitin-conjugating enzyme]-L-cysteine + N(6)-ubiquitinyl-[acceptor protein]-L-lysine.. It participates in protein modification; protein ubiquitination. In terms of biological role, exhibits E2-dependent E3 ligase activity. Involved in pollen mitosis II (PMII) regulation during male gametogenesis. This chain is E3 ubiquitin-protein ligase APD2, found in Arabidopsis thaliana (Mouse-ear cress).